The primary structure comprises 1323 residues: ABC transporter gloK (1323 aa).

Transmembrane regions (helical) follow at residues 6–26 (AIAS…TLEA), 102–122 (PHAL…AGIL), 138–158 (VAYG…VMST), 217–237 (IWAS…RLGV), 240–260 (VAAV…VFGF), 325–345 (LLVG…VFAF), and 359–379 (PLLA…GQAV). Positions 142–380 (LIAAYAIVYI…IFSLLGQAVS (239 aa)) constitute an ABC transmembrane type-1 1 domain. The 227-residue stretch at 471–697 (IRDCSACWSK…SSYLESLGTR (227 aa)) folds into the ABC transporter 1 domain. 503–510 (GPIGSGKS) contacts ATP. Helical transmembrane passes span 748 to 768 (GWVT…GLVF), 795 to 815 (YALW…WLMI), 821 to 841 (AAIQ…LVYF), 859 to 879 (LIDM…LSCI), 891 to 910 (YVAA…QLFY), 976 to 996 (LNLT…SIAL), and 1006 to 1026 (IGVA…LVYT). The region spanning 752–1031 (WWVFVLLCSG…TLVYTWTSLE (280 aa)) is the ABC transmembrane type-1 2 domain. The ABC transporter 2 domain occupies 1069-1300 (IRFQSVSAAY…PSFFASLLKA (232 aa)). Residue 1103 to 1110 (GRTGSGKS) participates in ATP binding.

It belongs to the ABC transporter superfamily. ABCC family. Conjugate transporter (TC 3.A.1.208) subfamily.

Its subcellular location is the cell membrane. In terms of biological role, 3-isopropylmalate dehydratase large subunit; part of the gene cluster that mediates the biosynthesis of pneumocandins, lipohexapeptides of the echinocandin family that prevent fungal cell wall formation by non-competitive inhibition of beta-1,3-glucan synthase. Possibly secretes antifungal pneumocandins, thus avoiding of intracellular accumulation and ameliorating the toxicity to the producing cells. In Glarea lozoyensis (strain ATCC 20868 / MF5171), this protein is ABC transporter gloK.